A 211-amino-acid chain; its full sequence is RING finger protein 222 (211 aa).

The RING-type zinc finger occupies 14-65 (CPVCYEKFRDLDGASRTLSCGHVFCHDCLVKYLLSTRVDGQVQRTIVCPICR). The chain crosses the membrane as a helical span at residues 187–207 (LITLIAVVAVVAAILPWVLLV).

It localises to the membrane. The polypeptide is RING finger protein 222 (Rnf222) (Mus musculus (Mouse)).